A 425-amino-acid polypeptide reads, in one-letter code: ATP-dependent RNA helicase RhlB (425 aa).

The Q motif signature appears at 9–37 (TRFADLALHPKIQQAISSAGFEYCTPIQA). In terms of domain architecture, Helicase ATP-binding spans 40–218 (LPVALSNRDV…YEHMNAPTKL (179 aa)). Residue 53 to 60 (AQTGTGKT) coordinates ATP. Residues 164–167 (DEAD) carry the DEAD box motif. Residues 242-389 (KFPLLLTLIE…VTKYDGDALL (148 aa)) form the Helicase C-terminal domain. A disordered region spans residues 391–425 (DLRRPRPIQRRRRHNSGGGKGKPRGRRSGPPRNAS). A compositionally biased stretch (basic residues) spans 395–419 (PRPIQRRRRHNSGGGKGKPRGRRSG).

This sequence belongs to the DEAD box helicase family. RhlB subfamily. In terms of assembly, component of the RNA degradosome, which is a multiprotein complex involved in RNA processing and mRNA degradation.

The protein resides in the cytoplasm. The enzyme catalyses ATP + H2O = ADP + phosphate + H(+). In terms of biological role, DEAD-box RNA helicase involved in RNA degradation. Has RNA-dependent ATPase activity and unwinds double-stranded RNA. This Idiomarina loihiensis (strain ATCC BAA-735 / DSM 15497 / L2-TR) protein is ATP-dependent RNA helicase RhlB.